The following is a 387-amino-acid chain: uncharacterized protein (387 aa).

An N-terminal signal peptide occupies residues 1–27 (MKKWMITIAMLILAGIALFVFISPLKS).

This is an uncharacterized protein from Bacillus subtilis (strain 168).